A 102-amino-acid chain; its full sequence is MVHKLTSEERKTRLERLPQWSAVPGRDAIQRSLRFADFNEAFGFMTRVAIKAQEMNHHPEWFNVYNRVDVTLSTHDADGLTERDIELALFIDAVAAHARPAS.

This sequence belongs to the pterin-4-alpha-carbinolamine dehydratase family.

The catalysed reaction is (4aS,6R)-4a-hydroxy-L-erythro-5,6,7,8-tetrahydrobiopterin = (6R)-L-erythro-6,7-dihydrobiopterin + H2O. The polypeptide is Putative pterin-4-alpha-carbinolamine dehydratase (Burkholderia multivorans (strain ATCC 17616 / 249)).